A 439-amino-acid polypeptide reads, in one-letter code: Xylose isomerase (439 aa).

Residues H100 and D103 contribute to the active site. Mg(2+)-binding residues include E231, E267, H270, D295, D306, D308, and D338.

Belongs to the xylose isomerase family. Homotetramer. Mg(2+) serves as cofactor.

The protein resides in the cytoplasm. The enzyme catalyses alpha-D-xylose = alpha-D-xylulofuranose. The polypeptide is Xylose isomerase (Rhodopirellula baltica (strain DSM 10527 / NCIMB 13988 / SH1)).